Consider the following 361-residue polypeptide: Molybdopterin synthase catalytic subunit (361 aa).

Substrate is bound by residues 101 to 102, Lys117, and 124 to 126; these read HR and KKE.

Belongs to the MoaE family. MOCS2B subfamily. As to quaternary structure, heterotetramer; composed of 2 small (Mocs2A) and 2 large (Mocs2B) subunits.

The protein localises to the cytoplasm. The enzyme catalyses 2 [molybdopterin-synthase sulfur-carrier protein]-C-terminal-Gly-aminoethanethioate + cyclic pyranopterin phosphate + H2O = molybdopterin + 2 [molybdopterin-synthase sulfur-carrier protein]-C-terminal Gly-Gly + 2 H(+). The protein operates within cofactor biosynthesis; molybdopterin biosynthesis. Functionally, catalytic subunit of the molybdopterin synthase complex, a complex that catalyzes the conversion of precursor Z into molybdopterin. Acts by mediating the incorporation of 2 sulfur atoms from thiocarboxylated Mocs2A into precursor Z to generate a dithiolene group. This chain is Molybdopterin synthase catalytic subunit, found in Drosophila pseudoobscura pseudoobscura (Fruit fly).